The chain runs to 486 residues: Vacuolar protein sorting-associated protein 73 (486 aa).

The Cytoplasmic segment spans residues 1-26 (MNRILSSASLLSNVSMPRQNKHKITK). The helical transmembrane segment at 27 to 47 (ALCYAIIVASIGSIQFGYHLS) threads the bilayer. Residues 48–90 (ELNAPQQVLSCSEFDIPMEGYPYDRTWLGKRGYKQCIPLNDEQ) lie on the Mitochondrial intermembrane side of the membrane. A helical membrane pass occupies residues 91–111 (IGIVTSVFCIGGILGSYFATS). Residues 112–119 (LANIYGRK) are Cytoplasmic-facing. The chain crosses the membrane as a helical span at residues 120 to 140 (FSSLINCTLNIVGSLIIFNSN). Residues 141 to 146 (SYRGLI) lie on the Mitochondrial intermembrane side of the membrane. A helical transmembrane segment spans residues 147-167 (IGRILVGISCGSLIVIIPLFI). Topologically, residues 168–178 (KEVAPSGWEGL) are cytoplasmic. The chain crosses the membrane as a helical span at residues 179–199 (LGSMTQICIRLGVLLTQGIAL). Residues 200-208 (PLTDSYRWR) are Mitochondrial intermembrane-facing. A helical membrane pass occupies residues 209 to 229 (WILFGSFLIAVLNFFMWFIVD). Residues 230–305 (ESPKWLLAHG…RDRTNVKSRH (76 aa)) are Cytoplasmic-facing. Residues 306–326 (VITVLLFGQQFCGINSIVLYG) traverse the membrane as a helical segment. Over 327–342 (TKIISQLYPQHAIRIN) the chain is Mitochondrial intermembrane. The chain crosses the membrane as a helical span at residues 343-363 (FFISMVNVLVTILVSLLIHSL). Residues 364-366 (PRK) lie on the Cytoplasmic side of the membrane. Residues 367 to 387 (PLLMTSTVLVSVTAFIMGIAM) traverse the membrane as a helical segment. At 388–396 (NHNKMNLLI) the chain is on the mitochondrial intermembrane side. A helical transmembrane segment spans residues 397–417 (VFSFIYMGVFTMGLNPLPFII). Over 418-432 (MREVSKPQDMVLAQR) the chain is Cytoplasmic. The chain crosses the membrane as a helical span at residues 433 to 453 (YGTICNWVGTFIIAYTFPIIH). A topological domain (mitochondrial intermembrane) is located at residue Asp-454. Residues 455 to 475 (VLSGYVFIIFAIIACSISAFI) form a helical membrane-spanning segment. The Cytoplasmic segment spans residues 476-486 (WKKVPETKRSG).

This sequence belongs to the major facilitator superfamily. Sugar transporter (TC 2.A.1.1) family.

Its subcellular location is the mitochondrion membrane. Functionally, may be involved in vacuolar protein sorting. The sequence is that of Vacuolar protein sorting-associated protein 73 (VPS73) from Saccharomyces cerevisiae (strain ATCC 204508 / S288c) (Baker's yeast).